A 452-amino-acid polypeptide reads, in one-letter code: BUB3-interacting and GLEBS motif-containing protein ZNF207 (452 aa).

The segment at 1 to 92 (MGRKKKKQLK…EGIPEKDMEE (92 aa)) is microtubule-binding region. C2H2-type zinc fingers lie at residues 11–34 (PWCW…KAKH) and 35–58 (FKCH…MQVH). Disordered stretches follow at residues 99–131 (QKTQ…SFQQ) and 298–330 (STMS…TSAT). The segment covering 113-123 (DDSDYDDDDDT) has biased composition (acidic residues). A GLEBS region spans residues 329–361 (ATSKLVHPDEDISLEEKRAQLPKYQRNLPRPGQ).

As to quaternary structure, interacts (via GLEBS region) with bub3.

The protein resides in the nucleus. It localises to the chromosome. It is found in the centromere. The protein localises to the kinetochore. Its subcellular location is the cytoplasm. The protein resides in the cytoskeleton. It localises to the spindle. Functionally, kinetochore- and microtubule-binding protein that plays a key role in spindle assembly. Znf207/BuGZ is mainly composed of disordered low-complexity regions and undergoes phase transition or coacervation to form temperature-dependent liquid droplets. Coacervation promotes microtubule bundling and concentrates tubulin, promoting microtubule polymerization and assembly of spindle and spindle matrix by concentrating its building blocks. The sequence is that of BUB3-interacting and GLEBS motif-containing protein ZNF207 from Xenopus laevis (African clawed frog).